The chain runs to 1610 residues: NHS-like protein 1 (1610 aa).

A Phosphoserine modification is found at serine 24. The disordered stretch occupies residues 145-169 (SPFCDDYQDEDEETDQKCSLSSSEE). Phosphoserine is present on residues serine 198 and serine 328. Residues 433 to 448 (TAQSAGQRESKSSGSS) show a composition bias toward polar residues. 2 disordered regions span residues 433–477 (TAQS…HWNE) and 531–602 (PAHP…DAGS). Residue serine 568 is modified to Phosphoserine. Residues 578–594 (GYSTPTSNMSSCSLDQT) show a composition bias toward polar residues. At serine 639 the chain carries Phosphoserine. The segment covering 649–667 (QKNQGDRSNYQDKSLSRNI) has biased composition (polar residues). Disordered stretches follow at residues 649–693 (QKNQ…KKSS), 715–778 (SLPG…SVKS), 791–981 (TGMQ…PPPE), 997–1535 (PRPA…GEGE), and 1566–1610 (EGGL…SEES). Over residues 715–730 (SLPGKSGSSPSQSPCS) the composition is skewed to low complexity. Polar residues-rich tracts occupy residues 740–760 (SRSQ…TPNV), 767–778 (TPSQSDTSSVKS), and 851–865 (SPSS…TPTA). The span at 895–928 (SLISSVSISSSSTSLSSSTSTEGSGTMKKLDPAV) shows a compositional bias: low complexity. Composition is skewed to pro residues over residues 929 to 946 (GSPP…PFPC) and 970 to 981 (PHSPVFPPPPPE). Positions 1001–1011 (LSPILPDSPVS) are enriched in low complexity. Over residues 1012-1031 (LPLPPPLLPSSEPPPAPPLD) the composition is skewed to pro residues. A compositionally biased stretch (polar residues) spans 1041-1053 (PFTNSGQPESSRG). At serine 1089 the chain carries Phosphoserine. Residues 1122–1153 (SRNSTNEMESESQPASVTSSLPTPAKSSSQGD) are compositionally biased toward polar residues. Position 1167 is a phosphoserine (serine 1167). Residues 1180 to 1193 (PSPSTTPLPDSSPS) are compositionally biased toward low complexity. Serine 1233 bears the Phosphoserine mark. 2 stretches are compositionally biased toward basic and acidic residues: residues 1240–1249 (GSVHSREAKE) and 1373–1383 (GRRDSDDDHSR). Phosphoserine is present on residues serine 1386 and serine 1388. Threonine 1392 carries the post-translational modification Phosphothreonine. Over residues 1405–1422 (QVGSIQRSIRKSSTSSDN) the composition is skewed to polar residues. Positions 1447 to 1460 (KNTDPRFQRSRSEP) are enriched in basic and acidic residues. Composition is skewed to low complexity over residues 1461–1474 (SPDA…CSPS) and 1504–1516 (SRTP…SRYS).

It belongs to the NHS family. As to expression, widely expressed. Expressed in adult and fetal brain, fetal eyes, adult lens, kidney, liver and intestine.

This chain is NHS-like protein 1 (NHSL1), found in Homo sapiens (Human).